The primary structure comprises 265 residues: MSSATQHIPFRLDGKVALVTGSGRGIGAAMATELGRAGAKVIVNYANSKESAEKLVEEIKKLGTDAVALQADVSKVPQTVRLFDEAIKVWGRLDIVCSNAGVVSFGHLEEVTEEEFDRVFTINTRGQFFVAREAYKHLNEGGRIIMMSSNTAHAFAVPRHSLYSGSKGAIESFVKVLAIDCGKKKITVNAVAPGGTVTDMFHDVSQHYIPGGEKYTAEERQQMAAHASPLVRNGYPVDIANAVVFLASKEGEWVNGKTIGVDGGS.

Positions 26, 72, 99, and 132 each coordinate NADP(+). Catalysis depends on proton donor residues S148 and S149. Positions 163, 167, and 198 each coordinate NADP(+). Y163 (proton acceptor) is an active-site residue. K167 acts as the Lowers pKa of active site Tyr in catalysis.

It belongs to the short-chain dehydrogenases/reductases (SDR) family.

It participates in secondary metabolite biosynthesis. Functionally, short-chain dehydrogenase/reductase; part of the gene cluster that mediates the biosynthesis of dibenzodioxocinones such as pestalotiollide B, a novel class of inhibitors against cholesterol ester transfer protein (CEPT). The biosynthesis initiates from condensation of acetate and malonate units catalyzed by the non-reducing PKS pks8/GME11356. Pks8/GME11356 lacks a thioesterase (TE) domain, which is important to the cyclizing of the third ring of atrochrysone carboxylic acid, and the esterase GME11355 might play the role of TE and catalyzes the cyclization reaction of the C ring. The lactamase-like protein GME11357 (or other beta-lactamases in Pestalotiopsis microspora) probably hydrolyzes the thioester bond between the ACP of pks8/GME11356 and the intermediate to release atrochrysone carboxylic acid, which is spontaneously dehydrates to form endocrocin anthrone. Endocrocin anthrone is further converted to emodin via the endocrocin intermediate. Emodin is then oxidized by several enzymes such as the Baeyer-Villiger oxidase GME11358, the oxidoreductase GME11367, the short chain dehydrogenase/reductase GME11373, as well as by other oxidoreductases from the cluster, to modify the A and C rings and open the B ring, and finally yield monodictyphenone. The prenyltransferase GME11375 may catalyze the addition reaction between the C5 side chains and the carbon bone of dibenzodioxocinones. The remaining biochemical reactions to the final product dibenzodioxocinones should be methylation catalyzed by methyltransferase GME11366 and reduction and lactonization reaction catalyzed by a series of oxidordeuctases. The polypeptide is Short-chain dehydrogenase/reductase GME11373 (Pestalotiopsis microspora).